The chain runs to 357 residues: UDP-N-acetylglucosamine--N-acetylmuramyl-(pentapeptide) pyrophosphoryl-undecaprenol N-acetylglucosamine transferase (357 aa).

Residues 14–16 (TGG), asparagine 128, arginine 169, serine 193, isoleucine 248, and glutamine 292 contribute to the UDP-N-acetyl-alpha-D-glucosamine site.

It belongs to the glycosyltransferase 28 family. MurG subfamily.

The protein localises to the cell inner membrane. It carries out the reaction di-trans,octa-cis-undecaprenyl diphospho-N-acetyl-alpha-D-muramoyl-L-alanyl-D-glutamyl-meso-2,6-diaminopimeloyl-D-alanyl-D-alanine + UDP-N-acetyl-alpha-D-glucosamine = di-trans,octa-cis-undecaprenyl diphospho-[N-acetyl-alpha-D-glucosaminyl-(1-&gt;4)]-N-acetyl-alpha-D-muramoyl-L-alanyl-D-glutamyl-meso-2,6-diaminopimeloyl-D-alanyl-D-alanine + UDP + H(+). It participates in cell wall biogenesis; peptidoglycan biosynthesis. Cell wall formation. Catalyzes the transfer of a GlcNAc subunit on undecaprenyl-pyrophosphoryl-MurNAc-pentapeptide (lipid intermediate I) to form undecaprenyl-pyrophosphoryl-MurNAc-(pentapeptide)GlcNAc (lipid intermediate II). In Bdellovibrio bacteriovorus (strain ATCC 15356 / DSM 50701 / NCIMB 9529 / HD100), this protein is UDP-N-acetylglucosamine--N-acetylmuramyl-(pentapeptide) pyrophosphoryl-undecaprenol N-acetylglucosamine transferase.